An 81-amino-acid polypeptide reads, in one-letter code: Photosystem I iron-sulfur center (81 aa).

4Fe-4S ferredoxin-type domains lie at 2–31 (SHSV…MIPW) and 39–68 (IASA…VRVY). [4Fe-4S] cluster is bound by residues C11, C14, C17, C21, C48, C51, C54, and C58.

In terms of assembly, the eukaryotic PSI reaction center is composed of at least 11 subunits. The cofactor is [4Fe-4S] cluster.

It is found in the plastid. The protein localises to the chloroplast thylakoid membrane. The catalysed reaction is reduced [plastocyanin] + hnu + oxidized [2Fe-2S]-[ferredoxin] = oxidized [plastocyanin] + reduced [2Fe-2S]-[ferredoxin]. Functionally, apoprotein for the two 4Fe-4S centers FA and FB of photosystem I (PSI); essential for photochemical activity. FB is the terminal electron acceptor of PSI, donating electrons to ferredoxin. The C-terminus interacts with PsaA/B/D and helps assemble the protein into the PSI complex. Required for binding of PsaD and PsaE to PSI. PSI is a plastocyanin-ferredoxin oxidoreductase, converting photonic excitation into a charge separation, which transfers an electron from the donor P700 chlorophyll pair to the spectroscopically characterized acceptors A0, A1, FX, FA and FB in turn. The polypeptide is Photosystem I iron-sulfur center (Arabis hirsuta (Hairy rock-cress)).